A 272-amino-acid chain; its full sequence is NH(3)-dependent NAD(+) synthetase (272 aa).

45–52 serves as a coordination point for ATP; sequence GISGGQDS. Asp51 is a binding site for Mg(2+). Arg138 provides a ligand contact to deamido-NAD(+). An ATP-binding site is contributed by Thr158. Glu163 contacts Mg(2+). Residues Lys171 and Asp178 each coordinate deamido-NAD(+). Residues Lys187 and Thr209 each coordinate ATP. 258 to 259 is a binding site for deamido-NAD(+); sequence HK.

This sequence belongs to the NAD synthetase family. In terms of assembly, homodimer.

It catalyses the reaction deamido-NAD(+) + NH4(+) + ATP = AMP + diphosphate + NAD(+) + H(+). Its pathway is cofactor biosynthesis; NAD(+) biosynthesis; NAD(+) from deamido-NAD(+) (ammonia route): step 1/1. In terms of biological role, catalyzes the ATP-dependent amidation of deamido-NAD to form NAD. Uses ammonia as a nitrogen source. The chain is NH(3)-dependent NAD(+) synthetase from Bacillus cereus (strain ATCC 14579 / DSM 31 / CCUG 7414 / JCM 2152 / NBRC 15305 / NCIMB 9373 / NCTC 2599 / NRRL B-3711).